The sequence spans 170 residues: Zinc finger protein 576 (170 aa).

The disordered stretch occupies residues 1–29; sequence MEDPNPEENMKQQDSPKERSPQSPGGNIC. Residues 8-20 are compositionally biased toward basic and acidic residues; the sequence is ENMKQQDSPKERS. 4 C2H2-type zinc fingers span residues 34–57, 71–93, 112–134, and 143–165; these read PKCT…KREH, FICF…QRSH, FPCP…RQMH, and FACT…YIRH.

It belongs to the krueppel C2H2-type zinc-finger protein family.

It is found in the nucleus. Its function is as follows. May be involved in transcriptional regulation. This is Zinc finger protein 576 (ZNF576) from Homo sapiens (Human).